The chain runs to 161 residues: Myosin regulatory light chain (161 aa).

Phosphoserine is present on residues Ser-13 and Ser-14. 3 EF-hand domains span residues 20–55, 56–91, and 93–128; these read EQVA…FGVF, VMED…RMKQ, and SNEQ…LGDK.

In terms of assembly, myosin is a hexamer of 2 heavy chains and 4 light chains (two regulatory light chains and two essential light chains).

The polypeptide is Myosin regulatory light chain (mlcR) (Dictyostelium discoideum (Social amoeba)).